The chain runs to 553 residues: HTH-type transcriptional regulator SgrR (553 aa).

One can recognise an HTH marR-type domain in the interval 1–113 (MSTSRLQQQF…RQMLLSQLGR (113 aa)). Residues 26 to 49 (LQALAEVLNCSRRHVRSLLGKMQH) constitute a DNA-binding region (H-T-H motif). The segment at 163–494 (ELEPDLSHHW…EELHQDIESW (332 aa)) is solute-binding.

Functionally, activates the small RNA gene sgrS under glucose-phosphate stress conditions as well as yfdZ. Represses its own transcription under both stress and non-stress conditions. Might act as a sensor of the intracellular accumulation of phosphoglucose by binding these molecules in its C-terminal solute-binding domain. This chain is HTH-type transcriptional regulator SgrR, found in Yersinia pseudotuberculosis serotype I (strain IP32953).